We begin with the raw amino-acid sequence, 102 residues long: Virulence plasmid protein pGP4-D (102 aa).

This Chlamydia trachomatis serovar L2 (strain ATCC VR-902B / DSM 19102 / 434/Bu) protein is Virulence plasmid protein pGP4-D.